Here is a 6077-residue protein sequence, read N- to C-terminus: Nonribosomal peptide synthetase nlsA (6077 aa).

An adenylation 1 region spans residues 417–618 (VFAYAPLIHG…LGRKDSQIKL (202 aa)). A Carrier 1 domain is found at 751-827 (HSEVTVEDRL…DLVTRVQEIK (77 aa)). The residue at position 788 (Ser-788) is an O-(pantetheine 4'-phosphoryl)serine. Condensation stretches follow at residues 842-1267 (LSPI…GKRL) and 1309-1737 (EDIY…KQRI). Adenylation regions lie at residues 1757 to 2149 (QEKM…YLGE) and 2755 to 3157 (DRVI…QVKL). One can recognise a Carrier 2 domain in the interval 3297-3373 (AVERAAESTL…DMAKCCDDTE (77 aa)). Ser-3334 carries the O-(pantetheine 4'-phosphoryl)serine modification. Positions 3524-3779 (DSRYRQCLYK…LLSVPRDSLM (256 aa)) are condensation 3. Positions 3816 to 4213 (ENAIMHPQAT…LGRKDHQVKL (398 aa)) are adenylation 4. The 77-residue stretch at 4361 to 4437 (REGDATPAII…ELAVSCGTKP (77 aa)) folds into the Carrier 3 domain. Ser-4398 is modified (O-(pantetheine 4'-phosphoryl)serine). 2 condensation regions span residues 4451–4869 (PLSP…RVLE) and 4916–5260 (VEDI…EDKT). Positions 5334-5410 (RAPNDSEKQL…NMMALINDRK (77 aa)) constitute a Carrier 4 domain. An O-(pantetheine 4'-phosphoryl)serine modification is found at Ser-5371. Positions 5476–5885 (DVLPVTDFQA…SLVANPNVAL (410 aa)) are condensation 6. A Carrier 5 domain is found at 5921–6004 (SEILVHSDLI…GHMAVLALNM (84 aa)). A compositionally biased stretch (low complexity) spans 6013 to 6027 (DSDAAPAPAYAPVDA). Residues 6013–6047 (DSDAAPAPAYAPVDARASRNVSTSRQQQEGLPLPA) are disordered. Over residues 6031–6041 (RNVSTSRQQQE) the composition is skewed to polar residues.

This sequence belongs to the NRP synthetase family.

Its pathway is secondary metabolite biosynthesis. Nonribosomal peptide synthetase involved in the synthesis of nidulanin A and derived compounds. Nidulanin A is a tetracyclopeptide with the sequence L-Phe-L-Kyn-L-Val-D-Val and an isoprene unit N-linked to the amino group of L-kynurenine. The NRPS nlsA is responsible of the synthesis of the cyclopeptide and the prenyltransferase nptA adds the isoprene unit on the L-kynurenine residue of nidulanin A. Further modifications lead to additional oxygenated related compounds. In Emericella nidulans (strain FGSC A4 / ATCC 38163 / CBS 112.46 / NRRL 194 / M139) (Aspergillus nidulans), this protein is Nonribosomal peptide synthetase nlsA.